The sequence spans 407 residues: Protein RecA (407 aa).

Position 79–86 (79–86 (GPESSGKT)) interacts with ATP. The interval 358 to 407 (LSLEASPEESDAKTLRRXASRGAGASSSRVQEGSAANDHFQDESTTAKLL) is disordered. A compositionally biased stretch (low complexity) spans 377 to 386 (SRGAGASSSR).

The protein belongs to the RecA family.

It is found in the cytoplasm. Its function is as follows. Can catalyze the hydrolysis of ATP in the presence of single-stranded DNA, the ATP-dependent uptake of single-stranded DNA by duplex DNA, and the ATP-dependent hybridization of homologous single-stranded DNAs. It interacts with LexA causing its activation and leading to its autocatalytic cleavage. The polypeptide is Protein RecA (Treponema pallidum (strain Nichols)).